Here is a 332-residue protein sequence, read N- to C-terminus: Tryptophan--tRNA ligase (332 aa).

ATP-binding positions include 11-13 and 19-20; these read TST and GN. The 'HIGH' region motif lies at 12 to 20; sequence STGKLTLGN. Asp140 contributes to the L-tryptophan binding site. ATP-binding positions include 152 to 154, Ile191, and 200 to 204; these read GQD and KMSKS. The short motif at 200 to 204 is the 'KMSKS' region element; the sequence is KMSKS.

This sequence belongs to the class-I aminoacyl-tRNA synthetase family. Homodimer.

It is found in the cytoplasm. The catalysed reaction is tRNA(Trp) + L-tryptophan + ATP = L-tryptophyl-tRNA(Trp) + AMP + diphosphate + H(+). Catalyzes the attachment of tryptophan to tRNA(Trp). This is Tryptophan--tRNA ligase from Mycoplasmopsis pulmonis (strain UAB CTIP) (Mycoplasma pulmonis).